Reading from the N-terminus, the 228-residue chain is DNA mismatch repair protein MutH (228 aa).

This sequence belongs to the MutH family.

Its subcellular location is the cytoplasm. Its function is as follows. Sequence-specific endonuclease that cleaves unmethylated GATC sequences. It is involved in DNA mismatch repair. The chain is DNA mismatch repair protein MutH from Yersinia pseudotuberculosis serotype O:1b (strain IP 31758).